Reading from the N-terminus, the 87-residue chain is Acylphosphatase (87 aa).

An Acylphosphatase-like domain is found at arginine 2–tyrosine 87. Catalysis depends on residues arginine 17 and asparagine 35.

It belongs to the acylphosphatase family.

It catalyses the reaction an acyl phosphate + H2O = a carboxylate + phosphate + H(+). The sequence is that of Acylphosphatase (acyP) from Deinococcus geothermalis (strain DSM 11300 / CIP 105573 / AG-3a).